The chain runs to 661 residues: Kininogen-1 (661 aa).

Positions 1-20 are cleaved as a signal peptide; the sequence is MKLITTLLLCSGLLLTLTQG. The Cystatin kininogen-type 1 domain maps to 28-131; sequence CNDEAVFQAV…TQTCKIAPSK (104 aa). 9 disulfide bridges follow: Cys28-Cys631, Cys83-Cys94, Cys107-Cys125, Cys141-Cys144, Cys205-Cys217, Cys228-Cys247, Cys263-Cys266, Cys327-Cys339, and Cys350-Cys369. N-linked (GlcNAc...) asparagine glycosylation occurs at Asn82. Residues 150–253 enclose the Cystatin kininogen-type 2 domain; sequence TDSPDLEPVL…SQSCTLYSGD (104 aa). 2 N-linked (GlcNAc...) asparagine glycosylation sites follow: Asn168 and Asn204. A glycan (N-linked (GlcNAc...) asparagine) is linked at Asn242. Residues 272-375 enclose the Cystatin kininogen-type 3 domain; it reads VDSPELKEVL…TVKCQALDMT (104 aa). Ser331 carries the post-translational modification Phosphoserine. 3 disordered regions span residues 405–471, 485–583, and 626–661; these read YIAR…LGHG, DGDD…FQDS, and ATSP…DALS. Basic residues-rich tracts occupy residues 434–471 and 492–526; these read KANK…LGHG and TVGH…HGKH. Over residues 541 to 555 the composition is skewed to low complexity; that stretch reads TESLASSSEYSTTST. The segment covering 650 to 661 has biased composition (acidic residues); the sequence is EFSDFDLLDALS.

As to quaternary structure, isoform LMW interacts with CRISP3. Bradykinin is released from kininogen by plasma kallikrein. Post-translationally, phosphorylated by FAM20C in the extracellular medium. In terms of processing, bradykinin is inactivated by ACE, which removes the dipeptide Arg-Phe from its C-terminus. Plasma.

The protein localises to the secreted. It is found in the extracellular space. Its function is as follows. Kininogens are inhibitors of thiol proteases. HMW-kininogen plays an important role in blood coagulation by helping to position optimally prekallikrein and factor XI next to factor XII; HMW-kininogen inhibits the thrombin- and plasmin-induced aggregation of thrombocytes. LMW-kininogen inhibits the aggregation of thrombocytes. LMW-kininogen is in contrast to HMW-kininogen not involved in blood clotting. In terms of biological role, the active peptide bradykinin is a potent vasodilatator that is released from HMW-kininogen shows a variety of physiological effects: (A) influence in smooth muscle contraction, (B) induction of hypotension, (C) natriuresis and diuresis, (D) decrease in blood glucose level, (E) it is a mediator of inflammation and causes (E1) increase in vascular permeability, (E2) stimulation of nociceptors (4E3) release of other mediators of inflammation (e.g. prostaglandins), (F) it has a cardioprotective effect (directly via bradykinin action, indirectly via endothelium-derived relaxing factor action). The sequence is that of Kininogen-1 (Kng1) from Mus musculus (Mouse).